A 741-amino-acid chain; its full sequence is Catalase-peroxidase (741 aa).

The first 23 residues, 1–23 (MLKKIVTALGMSGMLLASSNAIA), serve as a signal peptide directing secretion. Residues 102–223 (WHDAGTYRIY…YAATQMGLIY (122 aa)) constitute a cross-link (tryptophyl-tyrosyl-methioninium (Trp-Tyr) (with M-249)). H103 functions as the Proton acceptor in the catalytic mechanism. Residues 223–249 (YVNPEGPDGKPDIKGAASEIRQAFRAM) constitute a cross-link (tryptophyl-tyrosyl-methioninium (Tyr-Met) (with W-102)). H264 serves as a coordination point for heme b.

It belongs to the peroxidase family. Peroxidase/catalase subfamily. As to quaternary structure, homodimer or homotetramer. Requires heme b as cofactor. Formation of the three residue Trp-Tyr-Met cross-link is important for the catalase, but not the peroxidase activity of the enzyme.

It carries out the reaction H2O2 + AH2 = A + 2 H2O. The enzyme catalyses 2 H2O2 = O2 + 2 H2O. Functionally, bifunctional enzyme with both catalase and broad-spectrum peroxidase activity. The protein is Catalase-peroxidase of Francisella tularensis subsp. tularensis (strain WY96-3418).